We begin with the raw amino-acid sequence, 238 residues long: Proteasome subunit beta type-6 (238 aa).

A2 bears the N-acetylalanine mark. The propeptide at 2–33 (AAALAVRRAGSAPAFGPEALTPDWENREVSTG) is removed in mature form. T34 acts as the Nucleophile in catalysis. Position 68 is a phosphothreonine (T68).

It belongs to the peptidase T1B family. The 26S proteasome consists of a 20S proteasome core and two 19S regulatory subunits. The 20S proteasome core is a barrel-shaped complex made of 28 subunits that are arranged in four stacked rings. The two outer rings are each formed by seven alpha subunits, and the two inner rings are formed by seven beta subunits. The proteolytic activity is exerted by three beta-subunits PSMB5, PSMB6 and PSMB7.

Its subcellular location is the cytoplasm. It is found in the nucleus. It catalyses the reaction Cleavage of peptide bonds with very broad specificity.. Functionally, component of the 20S core proteasome complex involved in the proteolytic degradation of most intracellular proteins. This complex plays numerous essential roles within the cell by associating with different regulatory particles. Associated with two 19S regulatory particles, forms the 26S proteasome and thus participates in the ATP-dependent degradation of ubiquitinated proteins. The 26S proteasome plays a key role in the maintenance of protein homeostasis by removing misfolded or damaged proteins that could impair cellular functions, and by removing proteins whose functions are no longer required. Associated with the PA200 or PA28, the 20S proteasome mediates ubiquitin-independent protein degradation. This type of proteolysis is required in several pathways including spermatogenesis (20S-PA200 complex) or generation of a subset of MHC class I-presented antigenic peptides (20S-PA28 complex). Within the 20S core complex, PSMB6 displays a peptidylglutamyl-hydrolyzing activity also termed postacidic or caspase-like activity, meaning that the peptides bond hydrolysis occurs directly after acidic residues. The protein is Proteasome subunit beta type-6 (Psmb6) of Mus musculus (Mouse).